The sequence spans 309 residues: Homoserine O-acetyltransferase (309 aa).

Cysteine 148 functions as the Acyl-thioester intermediate in the catalytic mechanism. Substrate is bound by residues lysine 169 and serine 198. Histidine 241 serves as the catalytic Proton acceptor. The active site involves glutamate 243. Position 255 (arginine 255) interacts with substrate.

Belongs to the MetA family.

Its subcellular location is the cytoplasm. The catalysed reaction is L-homoserine + acetyl-CoA = O-acetyl-L-homoserine + CoA. It functions in the pathway amino-acid biosynthesis; L-methionine biosynthesis via de novo pathway; O-acetyl-L-homoserine from L-homoserine: step 1/1. In terms of biological role, transfers an acetyl group from acetyl-CoA to L-homoserine, forming acetyl-L-homoserine. In vitro, can also use propionyl-CoA as acyl donor. This is Homoserine O-acetyltransferase from Shouchella clausii (Alkalihalobacillus clausii).